A 217-amino-acid polypeptide reads, in one-letter code: Killer cell lectin-like receptor subfamily B member 1F (217 aa).

Residues Met1–Cys45 lie on the Cytoplasmic side of the membrane. Positions Cys31–Pro34 match the LCK-binding motif motif. The chain crosses the membrane as a helical; Signal-anchor for type II membrane protein span at residues Ala46–Val66. Over Gln67–Val217 the chain is Extracellular. Residue Asn81 is glycosylated (N-linked (GlcNAc...) asparagine). The 111-residue stretch at His101–Gln211 folds into the C-type lectin domain. 2 cysteine pairs are disulfide-bonded: Cys122–Cys210 and Cys189–Cys202.

As to expression, highly expressed in dendritic cells. Detectable in natural killer cells.

Its subcellular location is the membrane. In terms of biological role, binds CLEC2I/Clr-g leading to activation of natural killer cells or costimulation of IL-2 production and proliferation of T-cells in response to antigen stimulation. May contribute to the formation of the immunological synapse between T-cells and antigen-presenting dendritic cells. This is Killer cell lectin-like receptor subfamily B member 1F (Klrb1f) from Mus musculus (Mouse).